A 156-amino-acid polypeptide reads, in one-letter code: Ribosome maturation factor RimP (156 aa).

The protein belongs to the RimP family.

The protein resides in the cytoplasm. In terms of biological role, required for maturation of 30S ribosomal subunits. This is Ribosome maturation factor RimP from Oenococcus oeni (strain ATCC BAA-331 / PSU-1).